The chain runs to 774 residues: MERPLCSHLCSCLAVLALLSPLSLAQYDSWPHYPEYFQQPAPEYHQPQAPANVAKIQLRLAGQKRKHSEGRVEVYYDGQWGTVCDDDFSIHAAHVVCRELGYVEAKSWTASSSYGKGEGPIWLDNLHCTGNEATLAACTSNGWGVTDCKHTEDVGVVCSDKRIPGFKFDNSLINQIENLNIQVEDIRIRAILSTYRKRTPVTEGYVEVKEGKTWKQICDKHWTAKNSRVICGMFGFPGERTYNAKVYKMFASRRKQRYWPFSMDCTGTEAHISSCKLGPQVSLDPMKNVTCENGLPAVVSCVPGQVFSPDGPSRFRKAYKPEQPLVRLRGGAYIGEGRVEVLKNGEWGTVCDDKWDLVSASVVCRELGFGSAKEAVTGSRLGQGIGPIHLNEIQCTGNEKSIIDCKFNTESQGCNHEEDAGVRCNTPAMGLQKKLRLNGGRNPYEGRVEVLVERNGSLVWGMVCGQNWGIVEAMVVCRQLGLGFASNAFQETWYWHGDVNSNKVVMSGVKCSGTELSLAHCRHDGEDVACPQGGVQYGAGVACSETAPDLVLNAEMVQQTTYLEDRPMFMLQCAMEENCLSASAAQTNPTTGYRRLLRFSSQIHNNGQSDFRPKNGRHAWIWHDCHRHYHSMEVFTHYDLLNLNGTKVAEGHKASFCLEDTECEGDIQKNYECANFGDQGITMGCWDMYRHDIDCQWVDITDVPPGDYLFQVVINPNFEVAESDYSNNIMKCRSRYDGHRIWMYNCHIGGSFSEETEKKFGHFSGLLNNQLSPQ.

The signal sequence occupies residues Met1–Ala25. 4 SRCR domains span residues Leu58–Ser159, Ile188–Val302, Val326–Asn425, and Leu435–Ser544. Intrachain disulfides connect Cys84–Cys148, Cys97–Cys158, Cys128–Cys138, Cys218–Cys291, Cys231–Cys301, Cys265–Cys275, Cys351–Cys414, Cys364–Cys424, and Cys395–Cys405. An N-linked (GlcNAc...) asparagine glycan is attached at Asn288. N-linked (GlcNAc...) asparagine glycosylation occurs at Asn455. Cystine bridges form between Cys464/Cys530, Cys477/Cys543, and Cys511/Cys521. A lysyl-oxidase like region spans residues Pro548–Ser751. Residues Asp549 and Leu550 each contribute to the Ca(2+) site. 4 disulfides stabilise this stretch: Cys573-Cys625, Cys579-Cys695, Cys657-Cys673, and Cys663-Cys685. 3 residues coordinate Cu cation: His626, His628, and His630. Residue Asn644 is glycosylated (N-linked (GlcNAc...) asparagine). Positions Lys653–Tyr689 form a cross-link, lysine tyrosylquinone (Lys-Tyr). Residue Tyr689 is modified to 2',4',5'-topaquinone. The Ca(2+) site is built by Glu722, Asp724, Asn727, and Asn728. Cys732 and Cys746 are joined by a disulfide.

Belongs to the lysyl oxidase family. In terms of assembly, component of some chromatin repressor complex. Interacts with SNAI1. Interacts with TAF10. Interacts with HSPA5. Interacts with EFEMP2. Cu cation is required as a cofactor. It depends on lysine tyrosylquinone residue as a cofactor. The lysine tyrosylquinone cross-link (LTQ) is generated by condensation of the epsilon-amino group of a lysine with a topaquinone produced by oxidation of tyrosine. In terms of processing, N-glycosylated. N-glycosylation on Asn-455 and Asn-644 may be essential for proper folding and secretion; may be composed of a fucosylated carbohydrates attached to a trimannose N-linked glycan core.

The protein resides in the secreted. Its subcellular location is the extracellular space. It localises to the extracellular matrix. It is found in the basement membrane. The protein localises to the nucleus. The protein resides in the chromosome. Its subcellular location is the endoplasmic reticulum. The catalysed reaction is L-lysyl-[protein] + O2 + H2O = (S)-2-amino-6-oxohexanoyl-[protein] + H2O2 + NH4(+). With respect to regulation, specifically inhibited by a mouse monoclonal antibody AB0023, inhibition occurs in a non-competitive manner. Functionally, mediates the post-translational oxidative deamination of lysine residues on target proteins leading to the formation of deaminated lysine (allysine). Acts as a transcription corepressor and specifically mediates deamination of trimethylated 'Lys-4' of histone H3 (H3K4me3), a specific tag for epigenetic transcriptional activation. Shows no activity against histone H3 when it is trimethylated on 'Lys-9' (H3K9me3) or 'Lys-27' (H3K27me3) or when 'Lys-4' is monomethylated (H3K4me1) or dimethylated (H3K4me2). Also mediates deamination of methylated TAF10, a member of the transcription factor IID (TFIID) complex, which induces release of TAF10 from promoters, leading to inhibition of TFIID-dependent transcription. LOXL2-mediated deamination of TAF10 results in transcriptional repression of genes required for embryonic stem cell pluripotency including POU5F1/OCT4, NANOG, KLF4 and SOX2. Involved in epithelial to mesenchymal transition (EMT) via interaction with SNAI1 and participates in repression of E-cadherin CDH1, probably by mediating deamination of histone H3. During EMT, involved with SNAI1 in negatively regulating pericentromeric heterochromatin transcription. SNAI1 recruits LOXL2 to pericentromeric regions to oxidize histone H3 and repress transcription which leads to release of heterochromatin component CBX5/HP1A, enabling chromatin reorganization and acquisition of mesenchymal traits. Interacts with the endoplasmic reticulum protein HSPA5 which activates the IRE1-XBP1 pathway of the unfolded protein response, leading to expression of several transcription factors involved in EMT and subsequent EMT induction. When secreted into the extracellular matrix, promotes cross-linking of extracellular matrix proteins by mediating oxidative deamination of peptidyl lysine residues in precursors to fibrous collagen and elastin. Acts as a regulator of sprouting angiogenesis, probably via collagen IV scaffolding. Acts as a regulator of chondrocyte differentiation, probably by regulating expression of factors that control chondrocyte differentiation. This chain is Lysyl oxidase homolog 2 (LOXL2), found in Pongo abelii (Sumatran orangutan).